Here is a 276-residue protein sequence, read N- to C-terminus: Putative aliphatic sulfonates transport permease protein SsuC (276 aa).

7 helical membrane-spanning segments follow: residues Gly-32 to Val-52, Ala-54 to Gly-74, Ala-87 to Phe-107, Leu-119 to Asp-141, Ile-146 to Val-168, Ile-199 to Leu-219, and Val-242 to Leu-262. The ABC transmembrane type-1 domain maps to Leu-80–Val-260.

Belongs to the binding-protein-dependent transport system permease family. CysTW subfamily.

Its subcellular location is the cell membrane. In terms of biological role, part of a binding-protein-dependent transport system for aliphatic sulfonates. Probably responsible for the translocation of the substrate across the membrane. The polypeptide is Putative aliphatic sulfonates transport permease protein SsuC (ssuC) (Bacillus subtilis (strain 168)).